Here is a 1186-residue protein sequence, read N- to C-terminus: Probable inactive serine/threonine-protein kinase DDB_G0293184 (1186 aa).

The segment covering 1 to 12 has biased composition (acidic residues); sequence MEQEDQQYEEDS. 2 disordered regions span residues 1-55 and 99-122; these read MEQE…NNDS and MEQQQQQQHLQPPLSPNSASNTNF. Composition is skewed to low complexity over residues 34–48 and 99–110; these read TTTEITTTTTTTTPT and MEQQQQQQHLQP. Positions 173–437 constitute a Protein kinase domain; that stretch reads YESPPTLGKY…VHDLLRHPWL (265 aa). ATP is bound by residues 179 to 187 and K205; that span reads LGKYDKVIL. Disordered stretches follow at residues 447–468 and 530–551; these read SSSSSSQAHPTVQSNNLNGNVN and YNNYNNNNNNNNNTNDNDNECG. Over residues 453 to 468 the composition is skewed to polar residues; the sequence is QAHPTVQSNNLNGNVN. Residues 530–545 are compositionally biased toward low complexity; it reads YNNYNNNNNNNNNTND. Positions 631-659 form a coiled coil; it reads LKRTNQMANDLGRKYEILQSNIKRLEDYL. Over residues 766-784 the composition is skewed to polar residues; it reads NNLDPSNNNESVNLSTSPG. Disordered stretches follow at residues 766 to 911 and 959 to 988; these read NNLD…NGNN and ENKKHQKQKSLDSTNKQSPGSLGGAGGDVS. Over residues 785–836 the composition is skewed to low complexity; sequence SLVNSNSNPSISNSLNNNNNNNNNNNNNNNGNPNVIITTNNNCNSNSNGNNI. Residues 847–896 show a composition bias toward basic and acidic residues; that stretch reads KEVKEGKEIKEIKEPKEKDKDKEKDKDKEKDKDKEKDKDKEKEKDKDKEN. Residues 875–909 are a coiled coil; that stretch reads EKDKDKEKDKDKEKEKDKDKENNNNNNSNNNNNNG. Residues 897–911 show a composition bias toward low complexity; sequence NNNNNSNNNNNNGNN. The segment covering 969-978 has biased composition (polar residues); that stretch reads LDSTNKQSPG. The 183-residue stretch at 1004–1186 folds into the Rho-GAP domain; sequence VRLDDLMTRE…LSFPKFNLSV (183 aa).

This sequence belongs to the protein kinase superfamily. STE Ser/Thr protein kinase family.

The chain is Probable inactive serine/threonine-protein kinase DDB_G0293184 from Dictyostelium discoideum (Social amoeba).